The following is a 150-amino-acid chain: Urease accessory protein UreE (150 aa).

It belongs to the UreE family.

Its subcellular location is the cytoplasm. Involved in urease metallocenter assembly. Binds nickel. Probably functions as a nickel donor during metallocenter assembly. The sequence is that of Urease accessory protein UreE from Staphylococcus aureus (strain Mu3 / ATCC 700698).